The sequence spans 183 residues: ATP synthase subunit delta (183 aa).

Belongs to the ATPase delta chain family. F-type ATPases have 2 components, F(1) - the catalytic core - and F(0) - the membrane proton channel. F(1) has five subunits: alpha(3), beta(3), gamma(1), delta(1), epsilon(1). F(0) has three main subunits: a(1), b(2) and c(10-14). The alpha and beta chains form an alternating ring which encloses part of the gamma chain. F(1) is attached to F(0) by a central stalk formed by the gamma and epsilon chains, while a peripheral stalk is formed by the delta and b chains.

It localises to the cell inner membrane. Functionally, f(1)F(0) ATP synthase produces ATP from ADP in the presence of a proton or sodium gradient. F-type ATPases consist of two structural domains, F(1) containing the extramembraneous catalytic core and F(0) containing the membrane proton channel, linked together by a central stalk and a peripheral stalk. During catalysis, ATP synthesis in the catalytic domain of F(1) is coupled via a rotary mechanism of the central stalk subunits to proton translocation. Its function is as follows. This protein is part of the stalk that links CF(0) to CF(1). It either transmits conformational changes from CF(0) to CF(1) or is implicated in proton conduction. The polypeptide is ATP synthase subunit delta (Ruthia magnifica subsp. Calyptogena magnifica).